Reading from the N-terminus, the 525-residue chain is GMP synthase [glutamine-hydrolyzing] (525 aa).

Positions 3-200 (KILILDFGSQ…VLHVAGCKPS (198 aa)) constitute a Glutamine amidotransferase type-1 domain. Cysteine 79 acts as the Nucleophile in catalysis. Active-site residues include histidine 174 and glutamate 176. The GMPS ATP-PPase domain maps to 201 to 393 (WTMPNYIDEA…LGLPHDMVYR (193 aa)). 228–234 (SGGVDSS) provides a ligand contact to ATP.

Homodimer.

The enzyme catalyses XMP + L-glutamine + ATP + H2O = GMP + L-glutamate + AMP + diphosphate + 2 H(+). It participates in purine metabolism; GMP biosynthesis; GMP from XMP (L-Gln route): step 1/1. Its function is as follows. Catalyzes the synthesis of GMP from XMP. The chain is GMP synthase [glutamine-hydrolyzing] from Chromobacterium violaceum (strain ATCC 12472 / DSM 30191 / JCM 1249 / CCUG 213 / NBRC 12614 / NCIMB 9131 / NCTC 9757 / MK).